Consider the following 304-residue polypeptide: Ribosomal RNA large subunit methyltransferase F (304 aa).

It belongs to the methyltransferase superfamily. METTL16/RlmF family.

Its subcellular location is the cytoplasm. The catalysed reaction is adenosine(1618) in 23S rRNA + S-adenosyl-L-methionine = N(6)-methyladenosine(1618) in 23S rRNA + S-adenosyl-L-homocysteine + H(+). In terms of biological role, specifically methylates the adenine in position 1618 of 23S rRNA. This Klebsiella pneumoniae subsp. pneumoniae (strain ATCC 700721 / MGH 78578) protein is Ribosomal RNA large subunit methyltransferase F.